A 1116-amino-acid chain; its full sequence is MAANEKMDVTVKTLDSQTRTFTVEAEILVKEFKAHISSAVGITPEKQRLIYQGRVLQEDKKLNEYNVDGKVIHLVERAPPQTQTSTSGPSTSSSTSPSSSNAAPVPGAPERNGNSYVMVGTFNLPHVMSGLGEASRGPSVSTISGSEPRVRLVLAQNILQDIQRNLDRLEGQPGNEQAAEPMDTAESEGEASSRETLPQTTQNADGQSNSTPTSHPSPSEYVEVLQSLSRVEERLAPFMQRYREILSSATSDTYENQEREQSQRIINLVGESLRLLGNALVAVSDLRCNLSSASPRHLHVVRPMSHYSGPMLLQQAAIPIQINVGTTVSTTGNGTHAGHVPSDGNATPSTNTSEHQRSNSENQPPPSGERPASDAPPNSVPHPHPRVIRITHQTVEPVMMMHMNIQDSASGGPTNIPPPTAGHGGSAHIHMPGLPPEFMQAISNQITQQAMAAASGQQIPGFQAPPRFVFTRPAAPSFNFQPGAAATTPPAPGGATTTAPGATVGPAGNASLAQMISGLVGQLLMHPVVVAQGGSSTSSTTSTSTSTSTSSSTSSSSSTVPTSTTTTTSTSFPNVSSVPSAQLPPGTDQHLSQLLGSLLGTASSGMSNLTMGSPSITVTVPGMPAFLQGVTDILQATQTVPVSTSPPQSASQAPPPPSSPAPPAHSAPPPAAAPESLPPEFFTSVVQGVLSSMLGSLSAADQSGTESIADFIQRLSGSHNIFQPDAEGPGGFFGDLLTLICHNFSLVDMVMLLHGHSQPLQNLQPQLRSFFLQEYLHQADPTPNNIQMASRNLTNGLEEYIRESFASVTVRDDVDITRTNLEFLQDQFNRITTHILHCADSTFGQRLLEMCNQSLFEWLALNLYCLRGDQNALTSVINERIRRLSLDVSPVLVSWVTSVLSLRLQVLLGQMPVTEGEIQRHVRRVGDASQVPEPSSQEQPMETMPVDFQQNGAASPVPATTVEEVLFLPPQSSVPTICPDSEHPTQGDSVSEQWTASVPPEWVPVIRQDLQNQRKIKQQPPLSDAYLSGMPAKRRKTMQGEGPHLSLSEAVSRAMKVTGAKPESSTECVKRELDNSEAQGEYKEQLCQDIQEILQDDESYTAQRFPNTHRAFRGDP.

Positions 7–82 (MDVTVKTLDS…HLVERAPPQT (76 aa)) constitute a Ubiquitin-like domain. Disordered stretches follow at residues 76–114 (ERAPPQTQTSTSGPSTSSSTSPSSSNAAPVPGAPERNGN), 170–221 (EGQP…PSEY), 329–385 (STTG…HPHP), 473–502 (PAAPSFNFQPGAAATTPPAPGGATTTAPGA), 533–589 (GGSS…GTDQ), 640–678 (VPVSTSPPQSASQAPPPPSSPAPPAHSAPPPAAAPESLP), and 1058–1080 (TGAKPESSTECVKRELDNSEAQG). Residues 79–100 (PPQTQTSTSGPSTSSSTSPSSS) show a composition bias toward low complexity. The span at 194–207 (RETLPQTTQNADGQ) shows a compositional bias: polar residues. Positions 208-219 (SNSTPTSHPSPS) are enriched in low complexity. Residues 344-353 (GNATPSTNTS) show a composition bias toward polar residues. Low complexity-rich tracts occupy residues 482–502 (PGAAATTPPAPGGATTTAPGA), 535–580 (SSTS…SVPS), and 641–652 (PVSTSPPQSASQ). Residues 653-672 (APPPPSSPAPPAHSAPPPAA) show a composition bias toward pro residues. Residues 1068–1080 (CVKRELDNSEAQG) show a composition bias toward basic and acidic residues.

As to quaternary structure, component of the bag6/bat3 complex.

It localises to the cytoplasm. The protein resides in the cytosol. The protein localises to the nucleus. Its subcellular location is the secreted. It is found in the extracellular exosome. Its function is as follows. ATP-independent molecular chaperone preventing the aggregation of misfolded and hydrophobic patches-containing proteins. Functions as part of a cytosolic protein quality control complex, the bag6/bat3 complex, which maintains these client proteins in a soluble state and participates in their proper delivery to the endoplasmic reticulum or alternatively can promote their sorting to the proteasome where they undergo degradation. The bag6/bat3 complex is involved in the post-translational delivery of tail-anchored/type II transmembrane proteins to the endoplasmic reticulum membrane. Similarly, the bag6/bat3 complex also functions as a sorting platform for proteins of the secretory pathway that are mislocalized to the cytosol either delivering them to the proteasome for degradation or to the endoplasmic reticulum. The bag6/bat3 complex also plays a role in the endoplasmic reticulum-associated degradation (ERAD), a quality control mechanism that eliminates unwanted proteins of the endoplasmic reticulum through their retrotranslocation to the cytosol and their targeting to the proteasome. It maintains these retrotranslocated proteins in an unfolded yet soluble state condition in the cytosol to ensure their proper delivery to the proteasome. Also required for selective ubiquitin-mediated degradation of defective nascent chain polypeptides by the proteasome. Also involved in endoplasmic reticulum stress-induced pre-emptive quality control, a mechanism that selectively attenuates the translocation of newly synthesized proteins into the endoplasmic reticulum and reroutes them to the cytosol for proteasomal degradation. May ensure the proper degradation of these proteins and thereby protects the endoplasmic reticulum from protein overload upon stress. By stabilizing a large spectrum of proteins, may indirectly affect different biological processes including apoptosis. By controlling the steady-state expression of the IGF1R receptor, indirectly regulates the insulin-like growth factor receptor signaling pathway. In terms of biological role, when nuclear, may also act as a component of some chromatin regulator complex. The polypeptide is Large proline-rich protein bag6-B (Xenopus laevis (African clawed frog)).